The sequence spans 520 residues: Amine oxidase [flavin-containing] B (520 aa).

Ser2 is subject to N-acetylserine. At 2-489 (SNKCDVIVVG…TFLERHLPSV (488 aa)) the chain is on the cytoplasmic side. Lys52 carries the N6-acetyllysine modification. An S-8alpha-FAD cysteine modification is found at Cys397. The helical; Anchor for type IV membrane protein transmembrane segment at 490–516 (PGLLKLLGLTTILSATALGFLAHKKGL) threads the bilayer. The Mitochondrial intermembrane segment spans residues 517 to 520 (FVRF).

Belongs to the flavin monoamine oxidase family. As to quaternary structure, monomer, homo- or heterodimer (containing two subunits of similar size). Each subunit contains a covalently bound flavin. Enzymatically active as monomer. FAD serves as cofactor.

Its subcellular location is the mitochondrion outer membrane. It carries out the reaction a secondary aliphatic amine + O2 + H2O = a primary amine + an aldehyde + H2O2. The enzyme catalyses (R)-adrenaline + O2 + H2O = (R)-3,4-dihydroxymandelaldehyde + methylamine + H2O2. It catalyses the reaction a primary methyl amine + O2 + H2O = an aldehyde + H2O2 + NH4(+). The catalysed reaction is dopamine + O2 + H2O = 3,4-dihydroxyphenylacetaldehyde + H2O2 + NH4(+). It carries out the reaction tyramine + O2 + H2O = (4-hydroxyphenyl)acetaldehyde + H2O2 + NH4(+). The enzyme catalyses (R)-noradrenaline + O2 + H2O = (R)-3,4-dihydroxymandelaldehyde + H2O2 + NH4(+). It catalyses the reaction benzylamine + O2 + H2O = benzaldehyde + H2O2 + NH4(+). The catalysed reaction is 2-phenylethylamine + O2 + H2O = 2-phenylacetaldehyde + H2O2 + NH4(+). It carries out the reaction N-acetylputrescine + O2 + H2O = 4-acetamidobutanal + H2O2 + NH4(+). Catalyzes the oxidative deamination of primary and some secondary amines such as neurotransmitters, and exogenous amines including the tertiary amine, neurotoxin 1-methyl-4-phenyl-1,2,3,6-tetrahydropyridine (MPTP), with concomitant reduction of oxygen to hydrogen peroxide and participates in the metabolism of neuroactive and vasoactive amines in the central nervous system and peripheral tissues. Preferentially degrades benzylamine and phenylethylamine. This Rattus norvegicus (Rat) protein is Amine oxidase [flavin-containing] B.